The primary structure comprises 521 residues: AAA ATPase forming ring-shaped complexes (521 aa).

Residues 4–44 are a coiled coil; sequence TEDLAALNDRLMAKNHALAEALNRAGKELTKAKSRLAQLAQ. 235-240 serves as a coordination point for ATP; the sequence is GNGKTM.

It belongs to the AAA ATPase family. In terms of assembly, homohexamer. Assembles into a hexameric ring structure.

The chain is AAA ATPase forming ring-shaped complexes from Bifidobacterium longum subsp. infantis (strain ATCC 15697 / DSM 20088 / JCM 1222 / NCTC 11817 / S12).